Here is a 251-residue protein sequence, read N- to C-terminus: Flap endonuclease Xni (251 aa).

Asp104 provides a ligand contact to Mg(2+). Positions 160-249 (VTPEQLADYW…LDGNLQQLRL (90 aa)) constitute a 5'-3' exonuclease domain. Positions 171, 172, 180, 182, and 185 each coordinate K(+). Positions 184-189 (GIGPKS) are interaction with DNA.

It belongs to the Xni family. Mg(2+) serves as cofactor. K(+) is required as a cofactor.

In terms of biological role, has flap endonuclease activity. During DNA replication, flap endonucleases cleave the 5'-overhanging flap structure that is generated by displacement synthesis when DNA polymerase encounters the 5'-end of a downstream Okazaki fragment. The polypeptide is Flap endonuclease Xni (Klebsiella pneumoniae subsp. pneumoniae (strain ATCC 700721 / MGH 78578)).